The chain runs to 221 residues: Response regulator protein PmrA (221 aa).

Positions 2–116 (RILLAEDDLL…ELQARVRALT (115 aa)) constitute a Response regulatory domain. Asp51 is subject to 4-aspartylphosphate. Residues 124–218 (LPQLVHGELR…VRGIGYGIDQ (95 aa)) constitute a DNA-binding region (ompR/PhoB-type).

It is found in the cytoplasm. Member of the two-component regulatory system PmrA/PmrB that plays a role in the regulation of resistance towards polymyxin B and cationic antimicrobial peptides in response to limiting concentrations of Mg(2+). Functions as a transcriptional activator by direct binding to a cis-acting sequence upstream of the target gene promoters including lipase lipA and pmrH promoters. Also autoregulates its own pmrAB operon under Mg(2+)-limiting conditions. This Pseudomonas aeruginosa (strain ATCC 15692 / DSM 22644 / CIP 104116 / JCM 14847 / LMG 12228 / 1C / PRS 101 / PAO1) protein is Response regulator protein PmrA (pmrA).